We begin with the raw amino-acid sequence, 321 residues long: Lipoyl synthase (321 aa).

7 residues coordinate [4Fe-4S] cluster: C68, C73, C79, C94, C98, C101, and S308. Positions 80–297 (FNHGTATFMI…KAYADEIGFT (218 aa)) constitute a Radical SAM core domain.

This sequence belongs to the radical SAM superfamily. Lipoyl synthase family. Requires [4Fe-4S] cluster as cofactor.

The protein localises to the cytoplasm. It carries out the reaction [[Fe-S] cluster scaffold protein carrying a second [4Fe-4S](2+) cluster] + N(6)-octanoyl-L-lysyl-[protein] + 2 oxidized [2Fe-2S]-[ferredoxin] + 2 S-adenosyl-L-methionine + 4 H(+) = [[Fe-S] cluster scaffold protein] + N(6)-[(R)-dihydrolipoyl]-L-lysyl-[protein] + 4 Fe(3+) + 2 hydrogen sulfide + 2 5'-deoxyadenosine + 2 L-methionine + 2 reduced [2Fe-2S]-[ferredoxin]. It participates in protein modification; protein lipoylation via endogenous pathway; protein N(6)-(lipoyl)lysine from octanoyl-[acyl-carrier-protein]: step 2/2. Catalyzes the radical-mediated insertion of two sulfur atoms into the C-6 and C-8 positions of the octanoyl moiety bound to the lipoyl domains of lipoate-dependent enzymes, thereby converting the octanoylated domains into lipoylated derivatives. The polypeptide is Lipoyl synthase (Pseudoalteromonas translucida (strain TAC 125)).